We begin with the raw amino-acid sequence, 337 residues long: tRNA N6-adenosine threonylcarbamoyltransferase (337 aa).

2 residues coordinate Fe cation: histidine 111 and histidine 115. Residues 134 to 138 (LVSGG), aspartate 167, glycine 180, and asparagine 272 each bind substrate. Fe cation is bound at residue aspartate 300.

Belongs to the KAE1 / TsaD family. It depends on Fe(2+) as a cofactor.

The protein localises to the cytoplasm. The enzyme catalyses L-threonylcarbamoyladenylate + adenosine(37) in tRNA = N(6)-L-threonylcarbamoyladenosine(37) in tRNA + AMP + H(+). Required for the formation of a threonylcarbamoyl group on adenosine at position 37 (t(6)A37) in tRNAs that read codons beginning with adenine. Is involved in the transfer of the threonylcarbamoyl moiety of threonylcarbamoyl-AMP (TC-AMP) to the N6 group of A37, together with TsaE and TsaB. TsaD likely plays a direct catalytic role in this reaction. In Salmonella choleraesuis (strain SC-B67), this protein is tRNA N6-adenosine threonylcarbamoyltransferase.